A 482-amino-acid chain; its full sequence is O-acyltransferase ausP (482 aa).

Residues H180 and D412 each act as proton acceptor in the active site.

It belongs to the plant acyltransferase family. In terms of assembly, monomer.

Its pathway is secondary metabolite biosynthesis; terpenoid biosynthesis. In terms of biological role, O-acyltransferase; part of the gene cluster B that mediates the biosynthesis of the fungal meroterpenoid acetoxydehydroaustin. The first step of the pathway is the synthesis of 3,5-dimethylorsellinic acid by the polyketide synthase ausA. 3,5-dimethylorsellinic acid is then prenylated by the polyprenyl transferase ausN. Further epoxidation by the FAD-dependent monooxygenase ausM and cyclization by the probable terpene cyclase ausL lead to the formation of protoaustinoid A. Protoaustinoid A is then oxidized to spiro-lactone preaustinoid A3 by the combined action of the FAD-binding monooxygenases ausB and ausC, and the dioxygenase ausE. Acid-catalyzed keto-rearrangement and ring contraction of the tetraketide portion of preaustinoid A3 by ausJ lead to the formation of preaustinoid A4. The aldo-keto reductase ausK, with the help of ausH, is involved in the next step by transforming preaustinoid A4 into isoaustinone which is in turn hydroxylated by the P450 monooxygenase ausI to form austinolide. The cytochrome P450 monooxygenase ausG then modifies austinolide to austinol. Austinol is further acetylated to austin by the O-acetyltransferase ausP, which spontaneously changes to dehydroaustin. The cytochrome P450 monooxygenase then converts dehydroaustin is into 7-dehydrodehydroaustin. The hydroxylation catalyzed by ausR permits the second O-acetyltransferase ausQ to add an additional acetyl group to the molecule, leading to the formation of acetoxydehydroaustin. Due to genetic rearrangements of the clusters and the subsequent loss of some enzymes, the end product of the Penicillium brasilianum austinoid biosynthesis clusters is acetoxydehydroaustin. The sequence is that of O-acyltransferase ausP from Penicillium brasilianum.